Reading from the N-terminus, the 470-residue chain is Calmodulin-binding receptor-like cytoplasmic kinase 1 (470 aa).

Disordered regions lie at residues 1 to 29 (MPMRSKTPTPLRFSNGKHQRDDSEYSWTD) and 65 to 128 (PTEC…SKSW). Basic and acidic residues predominate over residues 65-82 (PTECRSDPGESSTHDRES). 2 stretches are compositionally biased toward polar residues: residues 83–98 (TLSGWTGYSSPSSFGR) and 108–121 (YRFSGSRFQSPGKD). In terms of domain architecture, Protein kinase spans 147–423 (FSSVHQIGEG…MKGIAEKLWA (277 aa)). Residues 153–161 (IGEGGFGTV) and K175 each bind ATP. Residues 162-185 (FKGKLDDGTIVAIKRARKNNYGKS) are caM-binding. D273 acts as the Proton acceptor in catalysis. Phosphoserine occurs at positions 277 and 308. A Phosphothreonine modification is found at T309. Phosphotyrosine is present on Y322.

Belongs to the protein kinase superfamily. Ser/Thr protein kinase family. As to quaternary structure, interacts with calmodulin (CaM) in a Ca(2+)-dependent manner. The cofactor is Mg(2+). Autophosphorylated.

The protein localises to the cytoplasm. The enzyme catalyses L-seryl-[protein] + ATP = O-phospho-L-seryl-[protein] + ADP + H(+). The catalysed reaction is L-threonyl-[protein] + ATP = O-phospho-L-threonyl-[protein] + ADP + H(+). Up-regulated by Ca(2+)/CaM. This chain is Calmodulin-binding receptor-like cytoplasmic kinase 1 (CRCK1), found in Arabidopsis thaliana (Mouse-ear cress).